The chain runs to 692 residues: DNA ligase (692 aa).

NAD(+) is bound by residues 40-44 (DAAYD), 89-90 (SL), and E121. K123 (N6-AMP-lysine intermediate) is an active-site residue. The NAD(+) site is built by R144, E181, K297, and K321. Zn(2+)-binding residues include C415, C417, C439, and C445. The BRCT domain occupies 614–692 (KTDTAVAGKT…EDEWLEMVGS (79 aa)).

This sequence belongs to the NAD-dependent DNA ligase family. LigA subfamily. Requires Mg(2+) as cofactor. Mn(2+) serves as cofactor.

It catalyses the reaction NAD(+) + (deoxyribonucleotide)n-3'-hydroxyl + 5'-phospho-(deoxyribonucleotide)m = (deoxyribonucleotide)n+m + AMP + beta-nicotinamide D-nucleotide.. Its function is as follows. DNA ligase that catalyzes the formation of phosphodiester linkages between 5'-phosphoryl and 3'-hydroxyl groups in double-stranded DNA using NAD as a coenzyme and as the energy source for the reaction. It is essential for DNA replication and repair of damaged DNA. This chain is DNA ligase, found in Phenylobacterium zucineum (strain HLK1).